A 330-amino-acid polypeptide reads, in one-letter code: Aspartate--ammonia ligase (330 aa).

It belongs to the class-II aminoacyl-tRNA synthetase family. AsnA subfamily.

The protein resides in the cytoplasm. The enzyme catalyses L-aspartate + NH4(+) + ATP = L-asparagine + AMP + diphosphate + H(+). Its pathway is amino-acid biosynthesis; L-asparagine biosynthesis; L-asparagine from L-aspartate (ammonia route): step 1/1. The sequence is that of Aspartate--ammonia ligase from Escherichia coli O8 (strain IAI1).